Here is a 238-residue protein sequence, read N- to C-terminus: CS1 fimbrial subunit B (238 aa).

Residues 1–17 form the signal peptide; that stretch reads MRKLFLSLLMIPFVAKA.

The protein localises to the fimbrium. Its function is as follows. Might function as a shuttle protein in the transport of fimbria through the periplasmic space or might function as an adhesin. The sequence is that of CS1 fimbrial subunit B (csoB) from Escherichia coli.